The following is a 188-amino-acid chain: NADH-quinone oxidoreductase subunit I 2 (188 aa).

4Fe-4S ferredoxin-type domains are found at residues histidine 56–tyrosine 88 and alanine 98–glutamine 127. Residues cysteine 68, cysteine 71, cysteine 74, cysteine 78, cysteine 107, cysteine 110, cysteine 113, and cysteine 117 each contribute to the [4Fe-4S] cluster site.

The protein belongs to the complex I 23 kDa subunit family. NDH-1 is composed of 14 different subunits. Subunits NuoA, H, J, K, L, M, N constitute the membrane sector of the complex. The cofactor is [4Fe-4S] cluster.

The protein resides in the cell inner membrane. The catalysed reaction is a quinone + NADH + 5 H(+)(in) = a quinol + NAD(+) + 4 H(+)(out). In terms of biological role, NDH-1 shuttles electrons from NADH, via FMN and iron-sulfur (Fe-S) centers, to quinones in the respiratory chain. The immediate electron acceptor for the enzyme in this species is believed to be ubiquinone. Couples the redox reaction to proton translocation (for every two electrons transferred, four hydrogen ions are translocated across the cytoplasmic membrane), and thus conserves the redox energy in a proton gradient. In Rhizobium etli (strain ATCC 51251 / DSM 11541 / JCM 21823 / NBRC 15573 / CFN 42), this protein is NADH-quinone oxidoreductase subunit I 2.